The sequence spans 224 residues: Ribose-5-phosphate isomerase A (224 aa).

Substrate-binding positions include 32–35 (TGST), 85–88 (DGAD), and 98–101 (KGGG). Catalysis depends on Glu107, which acts as the Proton acceptor. Lys125 provides a ligand contact to substrate.

This sequence belongs to the ribose 5-phosphate isomerase family. Homodimer.

The enzyme catalyses aldehydo-D-ribose 5-phosphate = D-ribulose 5-phosphate. The protein operates within carbohydrate degradation; pentose phosphate pathway; D-ribose 5-phosphate from D-ribulose 5-phosphate (non-oxidative stage): step 1/1. Catalyzes the reversible conversion of ribose-5-phosphate to ribulose 5-phosphate. This chain is Ribose-5-phosphate isomerase A, found in Pseudomonas fluorescens (strain Pf0-1).